The following is a 338-amino-acid chain: Taste receptor type 2 member 39 (338 aa).

Over 1–30 (MLGRCFPPDTKEKQQLRMTKLCDPAESELS) the chain is Extracellular. The helical transmembrane segment at 31 to 51 (PFLITLILAVLLAEYLIGIIA) threads the bilayer. Residues 52–74 (NGFIMAIHAAEWVQNKAVSTSGR) lie on the Cytoplasmic side of the membrane. Residues 75–95 (ILVFLSVSRIALQSLMMLEIT) form a helical membrane-spanning segment. The Extracellular segment spans residues 96-116 (ISSTSLSFYSEDAVYYAFKIS). The helical transmembrane segment at 117–137 (FIFLNFCSLWFAAWLSFFYFV) threads the bilayer. Over 138-156 (KIANFSYPLFLKLRWRITG) the chain is Cytoplasmic. A helical membrane pass occupies residues 157 to 177 (LIPWLLWLSVFISFSHSMFCI). Over 178-205 (NIXTVYCNNSFPIHSSNSTKKTYLSEIN) the chain is Extracellular. Asn185 and Asn194 each carry an N-linked (GlcNAc...) asparagine glycan. The helical transmembrane segment at 206–226 (VVGLAFFFNLGIVTPLIMFIL) threads the bilayer. At 227-262 (TATLLILSLKRHTLHMGSNATGSNDPSMEAHMGAIK) the chain is on the cytoplasmic side. A helical membrane pass occupies residues 263 to 283 (ATSYFLILYIFNAVALFIYLS). At 284-291 (NMFDINSL) the chain is on the extracellular side. The helical transmembrane segment at 292–312 (WNNLCQIIMAAYPASHSILLI) threads the bilayer. Residues 313–338 (QDNPGLRRAWKRLQLRLHLYPKEWTL) are Cytoplasmic-facing.

Belongs to the G-protein coupled receptor T2R family.

The protein localises to the membrane. Its function is as follows. Receptor that may play a role in the perception of bitterness and is gustducin-linked. May play a role in sensing the chemical composition of the gastrointestinal content. The activity of this receptor may stimulate alpha gustducin, mediate PLC-beta-2 activation and lead to the gating of TRPM5. This is Taste receptor type 2 member 39 (TAS2R39) from Gorilla gorilla gorilla (Western lowland gorilla).